We begin with the raw amino-acid sequence, 212 residues long: Lysozyme g-like protein 2 (212 aa).

An N-terminal signal peptide occupies residues 1 to 19 (MLSSVVFWGLIALIGTSRG). 2 disulfide bridges follow: Cys-39–Cys-92 and Cys-53–Cys-61. Residue Glu-105 is part of the active site.

It belongs to the glycosyl hydrolase 23 family. As to expression, strong expression detected in the eye and weak expression in the testis. No expression is observed in any other tissues.

It is found in the secreted. Functionally, may act as a potent antibacterial protein that may play a role in the innate immunity. The sequence is that of Lysozyme g-like protein 2 (LYG2) from Homo sapiens (Human).